We begin with the raw amino-acid sequence, 288 residues long: tRNA pseudouridine synthase A (288 aa).

The Nucleophile role is filled by aspartate 59. Position 134 (tyrosine 134) interacts with substrate.

This sequence belongs to the tRNA pseudouridine synthase TruA family. As to quaternary structure, homodimer.

The catalysed reaction is uridine(38/39/40) in tRNA = pseudouridine(38/39/40) in tRNA. Its function is as follows. Formation of pseudouridine at positions 38, 39 and 40 in the anticodon stem and loop of transfer RNAs. In Leifsonia xyli subsp. xyli (strain CTCB07), this protein is tRNA pseudouridine synthase A.